The sequence spans 260 residues: Small ribosomal subunit protein uS2 (260 aa).

The disordered stretch occupies residues 225 to 260 (KGQTQTEAAPNAQAAPEAAAPAEQPAEEAAAASSEG). Residues 231–260 (EAAPNAQAAPEAAAPAEQPAEEAAAASSEG) show a composition bias toward low complexity.

Belongs to the universal ribosomal protein uS2 family.

In Rhodopirellula baltica (strain DSM 10527 / NCIMB 13988 / SH1), this protein is Small ribosomal subunit protein uS2.